A 411-amino-acid chain; its full sequence is Putative odorant receptor 59c (411 aa).

At 1–46 (MTKFFFKRLQTAPLDQEVSSLDASDYYYRIAFFLGWTPPKGALLRW) the chain is on the cytoplasmic side. The chain crosses the membrane as a helical span at residues 47–67 (IYSLWTLTTMWLGIVYLPLGL). Topologically, residues 68-86 (SLTYVKHFDRFTPTEFLTS) are extracellular. Residues 87-107 (LQVDINCIGNVIKSCVTYSQM) traverse the membrane as a helical segment. The Cytoplasmic portion of the chain corresponds to 108–139 (WRFRRMNELISSLDKRCVTTTQRRIFHKMVAR). Residues 140–160 (VNLIVILFLSTYLGFCFLTLF) form a helical membrane-spanning segment. Topologically, residues 161-185 (TSVFAGKAPWQLYNPLVDWRKGHWQ) are extracellular. Residues 186 to 206 (LWIASILEYCVVSIGTMQELM) form a helical membrane-spanning segment. The Cytoplasmic portion of the chain corresponds to 207–271 (SDTYAIVFIS…QIIRPILSIT (65 aa)). Residues 272–292 (IFAQFMLVGIDLGLAAISILF) form a helical membrane-spanning segment. Residues 293–296 (FPNT) lie on the Extracellular side of the membrane. Residues 297–317 (IWTIMANVSFIVAICTESFPC) traverse the membrane as a helical segment. Residues 318–369 (CMLCEHLIEDSVHVSNALFHSNWITADRSYKSAVLYFLHRAQQPIQFTAGSI) are Cytoplasmic-facing. The helical transmembrane segment at 370–390 (FPISVQSNIAVAKFAFTIITI) threads the bilayer. Over 391–411 (VNQMNLGEKFFSDRSNGDINP) the chain is Extracellular.

The protein belongs to the insect chemoreceptor superfamily. Heteromeric odorant receptor channel (TC 1.A.69) family. Or2a subfamily. In terms of assembly, interacts with Orco. Complexes exist early in the endomembrane system in olfactory sensory neurons (OSNs), coupling these complexes to the conserved ciliary trafficking pathway. In terms of tissue distribution, expressed in olfactory sensory neurons in the maxillary palp.

Its subcellular location is the cell membrane. Functionally, odorant receptor which mediates acceptance or avoidance behavior, depending on its substrates. The odorant receptor repertoire encodes a large collection of odor stimuli that vary widely in identity, intensity, and duration. May form a complex with Orco to form odorant-sensing units, providing sensitive and prolonged odorant signaling and calcium permeability. The chain is Putative odorant receptor 59c (Or59c) from Drosophila melanogaster (Fruit fly).